The primary structure comprises 653 residues: 2-oxoglutarate oxidoreductase subunit KorA (653 aa).

Residues 1 to 21 (MDPNGSGAGPESHDAAFHAAP) are disordered. Over residues 11-21 (ESHDAAFHAAP) the composition is skewed to basic and acidic residues.

As to quaternary structure, KG oxidoreductase (KOR) is composed of KorA and KorB subunits.

The enzyme catalyses 2 oxidized [2Fe-2S]-[ferredoxin] + 2-oxoglutarate + CoA = succinyl-CoA + 2 reduced [2Fe-2S]-[ferredoxin] + CO2 + H(+). It participates in carbohydrate metabolism; tricarboxylic acid cycle. Its function is as follows. Component of KG oxidoreductase (KOR) that catalyzes the CoA-dependent oxidative decarboxylation of 2-oxoglutarate (alpha-ketoglutarate, KG) to succinyl-CoA. Methyl viologen can act as electron acceptor in vitro; the physiologic electron acceptor is unknown. Is involved in the alternative TCA pathway that functions concurrently with fatty acid beta-oxidation. Since a growing body of evidence indicates that lipids (for example cholesterol and fatty acids) are a predominant growth substrate for M.tuberculosis during infection, flux through KOR likely represents an important step in intermediary metabolism in vivo. KOR-dependent decarboxylation of KG also appears to be an important source of CO(2) in M.tuberculosis metabolism. The chain is 2-oxoglutarate oxidoreductase subunit KorA (korA) from Mycobacterium tuberculosis (strain ATCC 25618 / H37Rv).